A 384-amino-acid chain; its full sequence is Glucans biosynthesis protein C (384 aa).

A run of 10 helical transmembrane segments spans residues 17-37, 54-74, 91-111, 140-160, 173-193, 212-232, 240-260, 274-294, 311-331, and 338-358; these read AWLM…THSW, FIHA…SYML, VGIP…ILLQ, LWFL…FTWF, AISL…YAAI, FIVM…LAFI, FTTP…AYLL, TESV…FSLG, ASLF…AYIT, and LIGF…LYEI.

It belongs to the acyltransferase 3 family. OpgC subfamily.

It localises to the cell membrane. It participates in glycan metabolism; osmoregulated periplasmic glucan (OPG) biosynthesis. Its function is as follows. Necessary for the succinyl substitution of periplasmic glucans. Could catalyze the transfer of succinyl residues from the cytoplasmic side of the membrane to the nascent glucan backbones on the periplasmic side of the membrane. This Salmonella agona (strain SL483) protein is Glucans biosynthesis protein C.